A 384-amino-acid chain; its full sequence is Putative pectate lyase 2 (384 aa).

An N-terminal signal peptide occupies residues 1-23 (MASLFLTIISLLFAAFSSSVVEA). The Ca(2+) site is built by Asp182, Asp206, and Asp210. Arg262 is a catalytic residue.

This sequence belongs to the polysaccharide lyase 1 family. Ca(2+) is required as a cofactor.

It carries out the reaction Eliminative cleavage of (1-&gt;4)-alpha-D-galacturonan to give oligosaccharides with 4-deoxy-alpha-D-galact-4-enuronosyl groups at their non-reducing ends.. It participates in glycan metabolism; pectin degradation; 2-dehydro-3-deoxy-D-gluconate from pectin: step 2/5. This chain is Putative pectate lyase 2, found in Arabidopsis thaliana (Mouse-ear cress).